The chain runs to 336 residues: Holliday junction branch migration complex subunit RuvB (336 aa).

A large ATPase domain (RuvB-L) region spans residues 1–184 (MYDEERIVSG…FGIVGHMEYY (184 aa)). Residues Leu23, Arg24, Gly65, Lys68, Thr69, Thr70, 131-133 (EDY), Arg174, Tyr184, and Arg221 each bind ATP. Thr69 lines the Mg(2+) pocket. The tract at residues 185–255 (NEVDLSQIIK…IVQFALDLLR (71 aa)) is small ATPAse domain (RuvB-S). The head domain (RuvB-H) stretch occupies residues 258 to 336 (KVGLDRTDRK…HLGIKYNKEG (79 aa)). DNA-binding residues include Arg313 and Arg318.

It belongs to the RuvB family. In terms of assembly, homohexamer. Forms an RuvA(8)-RuvB(12)-Holliday junction (HJ) complex. HJ DNA is sandwiched between 2 RuvA tetramers; dsDNA enters through RuvA and exits via RuvB. An RuvB hexamer assembles on each DNA strand where it exits the tetramer. Each RuvB hexamer is contacted by two RuvA subunits (via domain III) on 2 adjacent RuvB subunits; this complex drives branch migration. In the full resolvosome a probable DNA-RuvA(4)-RuvB(12)-RuvC(2) complex forms which resolves the HJ.

Its subcellular location is the cytoplasm. It carries out the reaction ATP + H2O = ADP + phosphate + H(+). In terms of biological role, the RuvA-RuvB-RuvC complex processes Holliday junction (HJ) DNA during genetic recombination and DNA repair, while the RuvA-RuvB complex plays an important role in the rescue of blocked DNA replication forks via replication fork reversal (RFR). RuvA specifically binds to HJ cruciform DNA, conferring on it an open structure. The RuvB hexamer acts as an ATP-dependent pump, pulling dsDNA into and through the RuvAB complex. RuvB forms 2 homohexamers on either side of HJ DNA bound by 1 or 2 RuvA tetramers; 4 subunits per hexamer contact DNA at a time. Coordinated motions by a converter formed by DNA-disengaged RuvB subunits stimulates ATP hydrolysis and nucleotide exchange. Immobilization of the converter enables RuvB to convert the ATP-contained energy into a lever motion, pulling 2 nucleotides of DNA out of the RuvA tetramer per ATP hydrolyzed, thus driving DNA branch migration. The RuvB motors rotate together with the DNA substrate, which together with the progressing nucleotide cycle form the mechanistic basis for DNA recombination by continuous HJ branch migration. Branch migration allows RuvC to scan DNA until it finds its consensus sequence, where it cleaves and resolves cruciform DNA. The sequence is that of Holliday junction branch migration complex subunit RuvB from Ligilactobacillus salivarius (strain UCC118) (Lactobacillus salivarius).